Consider the following 667-residue polypeptide: DNA ligase (667 aa).

Residues 32–36, 81–82, and glutamate 110 contribute to the NAD(+) site; these read DSEYD and SL. Residue lysine 112 is the N6-AMP-lysine intermediate of the active site. NAD(+) contacts are provided by arginine 133, glutamate 167, lysine 283, and lysine 307. 4 residues coordinate Zn(2+): cysteine 401, cysteine 404, cysteine 419, and cysteine 424. Positions 586 to 667 constitute a BRCT domain; the sequence is EGHPEFSGKT…FVDKQNELNS (82 aa).

Belongs to the NAD-dependent DNA ligase family. LigA subfamily. Mg(2+) is required as a cofactor. The cofactor is Mn(2+).

It catalyses the reaction NAD(+) + (deoxyribonucleotide)n-3'-hydroxyl + 5'-phospho-(deoxyribonucleotide)m = (deoxyribonucleotide)n+m + AMP + beta-nicotinamide D-nucleotide.. DNA ligase that catalyzes the formation of phosphodiester linkages between 5'-phosphoryl and 3'-hydroxyl groups in double-stranded DNA using NAD as a coenzyme and as the energy source for the reaction. It is essential for DNA replication and repair of damaged DNA. The sequence is that of DNA ligase from Staphylococcus aureus (strain USA300).